The primary structure comprises 199 residues: Thymidine kinase (199 aa).

ATP is bound by residues 23 to 30 (GSMFSGKT) and 95 to 98 (DEAQ). The Proton acceptor role is filled by glutamate 96. Residues cysteine 152, cysteine 155, cysteine 184, and cysteine 187 each coordinate Zn(2+).

The protein belongs to the thymidine kinase family. As to quaternary structure, homotetramer.

The protein localises to the cytoplasm. The catalysed reaction is thymidine + ATP = dTMP + ADP + H(+). In Bacteroides fragilis (strain ATCC 25285 / DSM 2151 / CCUG 4856 / JCM 11019 / LMG 10263 / NCTC 9343 / Onslow / VPI 2553 / EN-2), this protein is Thymidine kinase.